The following is a 445-amino-acid chain: 23S rRNA (uracil(1939)-C(5))-methyltransferase RlmD (445 aa).

Residues 6 to 64 (RRLPREPFEIAITGLSHEGRGIAHHDERTLFVHGALPGERVRAVYTKRRRSVAEARVVE) form the TRAM domain. Residues C77, C83, C86, and C165 each contribute to the [4Fe-4S] cluster site. S-adenosyl-L-methionine contacts are provided by Q274, F303, N308, E324, D351, and D372. C398 functions as the Nucleophile in the catalytic mechanism.

The protein belongs to the class I-like SAM-binding methyltransferase superfamily. RNA M5U methyltransferase family. RlmD subfamily.

The enzyme catalyses uridine(1939) in 23S rRNA + S-adenosyl-L-methionine = 5-methyluridine(1939) in 23S rRNA + S-adenosyl-L-homocysteine + H(+). In terms of biological role, catalyzes the formation of 5-methyl-uridine at position 1939 (m5U1939) in 23S rRNA. This is 23S rRNA (uracil(1939)-C(5))-methyltransferase RlmD from Alkalilimnicola ehrlichii (strain ATCC BAA-1101 / DSM 17681 / MLHE-1).